Here is a 162-residue protein sequence, read N- to C-terminus: Large ribosomal subunit protein bL17 (162 aa).

Residues 126–162 (KKEEVKTKSRRGGKAKKAEPTTEAPANTTEETTDSAE) are disordered. Residues 146–155 (TTEAPANTTE) show a composition bias toward low complexity.

It belongs to the bacterial ribosomal protein bL17 family. In terms of assembly, part of the 50S ribosomal subunit. Contacts protein L32.

The chain is Large ribosomal subunit protein bL17 from Flavobacterium psychrophilum (strain ATCC 49511 / DSM 21280 / CIP 103535 / JIP02/86).